Reading from the N-terminus, the 268-residue chain is uncharacterized protein (268 aa).

The signal sequence occupies residues 1-18; it reads MRGFLLLSLGVFSFSALA. Domain regions lie at residues 24 to 184 and 185 to 268; these read SHDL…ELLP and SPAT…NWLR. An intrachain disulfide couples Cys110 to Cys115.

In terms of assembly, monomer.

The protein localises to the periplasm. This is an uncharacterized protein from Pseudomonas aeruginosa (strain ATCC 15692 / DSM 22644 / CIP 104116 / JCM 14847 / LMG 12228 / 1C / PRS 101 / PAO1).